The chain runs to 227 residues: Ion-translocating oxidoreductase complex subunit E (227 aa).

5 helical membrane-spanning segments follow: residues 34 to 56 (AINA…TIIS), 68 to 88 (IPIY…LLHA), 91 to 111 (FNLY…CIIV), 127 to 147 (FFDG…VGSI), and 181 to 201 (TIIL…LIAI).

Belongs to the NqrDE/RnfAE family. As to quaternary structure, the complex is composed of six subunits: RnfA, RnfB, RnfC, RnfD, RnfE and RnfG.

The protein resides in the cell inner membrane. In terms of biological role, part of a membrane-bound complex that couples electron transfer with translocation of ions across the membrane. This chain is Ion-translocating oxidoreductase complex subunit E, found in Buchnera aphidicola subsp. Acyrthosiphon pisum (strain APS) (Acyrthosiphon pisum symbiotic bacterium).